The chain runs to 199 residues: Superoxide dismutase [Mn/Fe] 1 (199 aa).

Residues His27, His81, Asp161, and His165 each contribute to the Fe(3+) site. The Mn(2+) site is built by His27, His81, Asp161, and His165.

The protein belongs to the iron/manganese superoxide dismutase family. As to quaternary structure, homodimer. Can also form a heterodimer with SodM. It depends on Mn(2+) as a cofactor. Requires Fe(3+) as cofactor.

The enzyme catalyses 2 superoxide + 2 H(+) = H2O2 + O2. Destroys superoxide anion radicals which are normally produced within the cells and which are toxic to biological systems. Catalyzes the dismutation of superoxide anion radicals into O2 and H2O2 by successive reduction and oxidation of the transition metal ion at the active site. This chain is Superoxide dismutase [Mn/Fe] 1 (sodA), found in Staphylococcus aureus (strain USA300).